We begin with the raw amino-acid sequence, 92 residues long: MARSLKKGPFIDDHLMKKITKLNSEGKKTPFKSWSRRSTIYPDMIGHTVMIHNGKAFVPVYVNENMIGHKLGEFAPTRTFKGHGGDKKVAKK.

This sequence belongs to the universal ribosomal protein uS19 family.

In terms of biological role, protein S19 forms a complex with S13 that binds strongly to the 16S ribosomal RNA. The sequence is that of Small ribosomal subunit protein uS19 from Leptospira biflexa serovar Patoc (strain Patoc 1 / Ames).